A 513-amino-acid chain; its full sequence is Ankyrin repeat domain-containing protein 13C-B (513 aa).

Residues 1 to 19 (MTGEKIRSLHRDQKPSKDE) show a composition bias toward basic and acidic residues. Disordered stretches follow at residues 1–34 (MTGE…DGTF) and 55–77 (PSNP…PMTP). A compositionally biased stretch (acidic residues) spans 20-29 (DLLEPDEEAT). ANK repeat units follow at residues 83–114 (DVYF…QKDN), 115–144 (HGNT…PVKV), and 148–177 (QGWS…QQSR).

It localises to the endoplasmic reticulum membrane. In terms of biological role, acts as a molecular chaperone for G protein-coupled receptors, regulating their biogenesis and exit from the ER. The sequence is that of Ankyrin repeat domain-containing protein 13C-B (ankrd13c-b) from Xenopus laevis (African clawed frog).